We begin with the raw amino-acid sequence, 403 residues long: S-adenosylmethionine synthase (403 aa).

His17 lines the ATP pocket. Asp19 contacts Mg(2+). Position 45 (Glu45) interacts with K(+). Residues Glu58 and Gln104 each coordinate L-methionine. Residues Gln104–Thr114 form a flexible loop region. Residues Asp179–Lys181, Lys250–Phe251, Asp259, Arg265–Lys266, Ala282, and Lys286 each bind ATP. Residue Asp259 participates in L-methionine binding. Lys290 is an L-methionine binding site.

It belongs to the AdoMet synthase family. In terms of assembly, homotetramer; dimer of dimers. Mg(2+) serves as cofactor. Requires K(+) as cofactor.

It localises to the cytoplasm. The catalysed reaction is L-methionine + ATP + H2O = S-adenosyl-L-methionine + phosphate + diphosphate. The protein operates within amino-acid biosynthesis; S-adenosyl-L-methionine biosynthesis; S-adenosyl-L-methionine from L-methionine: step 1/1. Functionally, catalyzes the formation of S-adenosylmethionine (AdoMet) from methionine and ATP. The overall synthetic reaction is composed of two sequential steps, AdoMet formation and the subsequent tripolyphosphate hydrolysis which occurs prior to release of AdoMet from the enzyme. This Mycobacterium bovis (strain BCG / Pasteur 1173P2) protein is S-adenosylmethionine synthase.